Consider the following 688-residue polypeptide: Glycine--tRNA ligase beta subunit (688 aa).

Belongs to the class-II aminoacyl-tRNA synthetase family. Tetramer of two alpha and two beta subunits.

It localises to the cytoplasm. It carries out the reaction tRNA(Gly) + glycine + ATP = glycyl-tRNA(Gly) + AMP + diphosphate. This chain is Glycine--tRNA ligase beta subunit, found in Haemophilus influenzae (strain PittGG).